Reading from the N-terminus, the 244-residue chain is tRNA pseudouridine synthase A (244 aa).

Asp52 (nucleophile) is an active-site residue. Tyr110 provides a ligand contact to substrate.

This sequence belongs to the tRNA pseudouridine synthase TruA family. Homodimer.

It carries out the reaction uridine(38/39/40) in tRNA = pseudouridine(38/39/40) in tRNA. Functionally, formation of pseudouridine at positions 38, 39 and 40 in the anticodon stem and loop of transfer RNAs. This is tRNA pseudouridine synthase A from Clostridium kluyveri (strain ATCC 8527 / DSM 555 / NBRC 12016 / NCIMB 10680 / K1).